We begin with the raw amino-acid sequence, 601 residues long: MTTTPISNVRNFSIVAHIDHGKSTLADRLIQTTGGLQDREMKEQVLDSMDIERERGITIKAQTVRLRYKAKDGKDYILNLMDTPGHVDFAYEVSRCLAACEGALLVVDASQGVEAQTLANVYQAIDNNLEIVPVLNKVDLPAAEPDQVKQQIEDVIGIDASEAIMVSAKTGIGIPDVLEAIVTRLPPPKGDRDATLKALLVDSWYDVYLGVVVLVRVVDGVLKKGDRIRMMGTNAAYDVERVGVFTPKMVNVDELGPGEVGFITAAIKEVADTRVGDTITDDRKPITEMLPGFKPAIPVVFCGLFPVDADDFETLRGAMGKLRLNDASFSFEMETSAALGFGFRCGFLGLLHLEIIQERLSREFNLNLIATAPSVIYKMHLTDGQEIEIHNPIDMPDVVKIAEIEEPWIEATIMTPDDYLGAVLKLCQERRGTQKELTYVGSRAMAKYELPLNEVVFDFYDRLKSVSKGYASFDYHLTDYKAADLVKMQILVNNEPVDALSMLVHRSRAEGRGRAMVEKMKELIPPHMFQIPIQAAIGGKVIARETVRALRKDVTAKCYGGDITRKRKLLEKQKEGKKKMRQFGKVDIPQEAFIAALKVDS.

The tr-type G domain occupies 7–189; that stretch reads SNVRNFSIVA…AIVTRLPPPK (183 aa). GTP-binding positions include 19-24 and 136-139; these read DHGKST and NKVD.

Belongs to the TRAFAC class translation factor GTPase superfamily. Classic translation factor GTPase family. LepA subfamily.

The protein resides in the cell inner membrane. The enzyme catalyses GTP + H2O = GDP + phosphate + H(+). In terms of biological role, required for accurate and efficient protein synthesis under certain stress conditions. May act as a fidelity factor of the translation reaction, by catalyzing a one-codon backward translocation of tRNAs on improperly translocated ribosomes. Back-translocation proceeds from a post-translocation (POST) complex to a pre-translocation (PRE) complex, thus giving elongation factor G a second chance to translocate the tRNAs correctly. Binds to ribosomes in a GTP-dependent manner. This chain is Elongation factor 4, found in Afipia carboxidovorans (strain ATCC 49405 / DSM 1227 / KCTC 32145 / OM5) (Oligotropha carboxidovorans).